Reading from the N-terminus, the 407-residue chain is Aurora kinase (407 aa).

2 disordered regions span residues 1 to 43 and 66 to 137; these read MTPT…STSS and ERQG…TQSK. Low complexity-rich tracts occupy residues 31–43 and 126–136; these read SAST…STSS and STTTTMTSTQS. The region spanning 147-399 is the Protein kinase domain; that stretch reads FDIGRPLGKG…LEGVIAHAWI (253 aa). ATP-binding positions include lysine 157, lysine 176, and 224–227; that span reads LEYA. Aspartate 272 acts as the Proton acceptor in catalysis. An ATP-binding site is contributed by aspartate 290.

This sequence belongs to the protein kinase superfamily. Ser/Thr protein kinase family.

The protein localises to the cytoplasm. The protein resides in the cytoskeleton. It localises to the spindle. It is found in the midbody. Its subcellular location is the microtubule organizing center. The protein localises to the centrosome. The protein resides in the nucleus. It localises to the chromosome. It is found in the centromere. The enzyme catalyses L-seryl-[protein] + ATP = O-phospho-L-seryl-[protein] + ADP + H(+). It carries out the reaction L-threonyl-[protein] + ATP = O-phospho-L-threonyl-[protein] + ADP + H(+). Cdc2 activity is required for activation. Functionally, serine/threonine protein kinase that contributes to the regulation of cell cycle progression. Involved in meiotic apparatus formation and polar body extrusion. Contributes to Plk1 activation and phosphorylation of histone H3 at 'Ser-10' during meiosis I. Required for accurate progression of early embryonic M phase. Involved in chromosome alignment and cleavage furrow formation during early embryonic cycles. May be involved in mitotic spindle formation and cytokinesis. This chain is Aurora kinase, found in Patiria pectinifera (Starfish).